The chain runs to 582 residues: ATP-dependent lipid A-core flippase (582 aa).

5 consecutive transmembrane segments (helical) span residues 15 to 35 (LWPIISPFKLGLVVSGIALVI), 68 to 88 (YVVVLVIFLRGISNFISSYCL), 140 to 160 (GALITIVREGAYIISLLAVML), 161 to 181 (YTSWQLSIVLFLIGPIIAVLI), and 254 to 274 (VQIIASFALAAVLYLATVPTI). The 284-residue stretch at 27–310 (VVSGIALVIN…LTNVNAQFQK (284 aa)) folds into the ABC transmembrane type-1 domain. The 237-residue stretch at 342 to 578 (LSFKNVTFTY…NGAYKQLHHI (237 aa)) folds into the ABC transporter domain. 376–383 (GRSGSGKS) is an ATP binding site.

This sequence belongs to the ABC transporter superfamily. Lipid exporter (TC 3.A.1.106) family. In terms of assembly, homodimer.

It localises to the cell inner membrane. It carries out the reaction ATP + H2O + lipid A-core oligosaccharideSide 1 = ADP + phosphate + lipid A-core oligosaccharideSide 2.. Involved in lipopolysaccharide (LPS) biosynthesis. Translocates lipid A-core from the inner to the outer leaflet of the inner membrane. Transmembrane domains (TMD) form a pore in the inner membrane and the ATP-binding domain (NBD) is responsible for energy generation. The protein is ATP-dependent lipid A-core flippase of Pasteurella multocida (strain Pm70).